The sequence spans 503 residues: Dihydropyrimidinase (503 aa).

Zn(2+) is bound by residues histidine 66, histidine 68, and lysine 158. The residue at position 158 (lysine 158) is an N6-carboxylysine. Tyrosine 163 serves as a coordination point for substrate. 3 residues coordinate Zn(2+): histidine 191, histidine 247, and aspartate 325. Asparagine 346 lines the substrate pocket.

It belongs to the metallo-dependent hydrolases superfamily. Hydantoinase/dihydropyrimidinase family. Homotetramer. Zn(2+) serves as cofactor. Post-translationally, carboxylation allows a single lysine to coordinate two zinc ions.

It catalyses the reaction 5,6-dihydrouracil + H2O = 3-(carbamoylamino)propanoate + H(+). Its function is as follows. Catalyzes the second step of the reductive pyrimidine degradation, the reversible hydrolytic ring opening of dihydropyrimidines. Can catalyze the ring opening of 5,6-dihydrouracil to N-carbamyl-alanine and of 5,6-dihydrothymine to N-carbamyl-amino isobutyrate. The chain is Dihydropyrimidinase (pyd2) from Dictyostelium discoideum (Social amoeba).